The chain runs to 27 residues: FRLSPAARNILEKHSLDASQGTATGPR.

A disordered region spans residues 1–27 (FRLSPAARNILEKHSLDASQGTATGPR). The region spanning 2-27 (RLSPAARNILEKHSLDASQGTATGPR) is the Peripheral subunit-binding (PSBD) domain. Lys-13 is modified (N6-acetyllysine). Ser-15 is modified (phosphoserine). Over residues 17-27 (DASQGTATGPR) the composition is skewed to polar residues.

It belongs to the 2-oxoacid dehydrogenase family. In terms of assembly, part of the inner core of the multimeric pyruvate dehydrogenase complex that is composed of about 48 DLAT and 12 PDHX molecules. This core binds multiple copies of pyruvate dehydrogenase (subunits PDH1A and PDHB, E1), dihydrolipoamide acetyltransferase (DLAT, E2) and lipoamide dehydrogenase (DLD, E3). Interacts with SIRT4. Interacts with DLD.

The protein localises to the mitochondrion matrix. Functionally, required for anchoring dihydrolipoamide dehydrogenase (E3) to the dihydrolipoamide transacetylase (E2) core of the pyruvate dehydrogenase complexes of eukaryotes. This specific binding is essential for a functional PDH complex. This chain is Pyruvate dehydrogenase protein X component, mitochondrial, found in Mesocricetus auratus (Golden hamster).